Consider the following 650-residue polypeptide: Macrolide export ATP-binding/permease protein MacB (650 aa).

Residues 6-244 enclose the ABC transporter domain; sequence LKLTGITRRF…ASSPEAASSP (239 aa). Position 42 to 49 (42 to 49) interacts with ATP; it reads GASGSGKS. The tract at residues 227 to 246 is disordered; it reads QTRPEEATASSPEAASSPAT. Residues 233–246 show a composition bias toward low complexity; it reads ATASSPEAASSPAT. A run of 4 helical transmembrane segments spans residues 275 to 295, 523 to 543, 580 to 600, and 615 to 635; these read FLTM…VALG, LTLL…IGVM, LVCL…GVLF, and SIIA…FFPA.

Belongs to the ABC transporter superfamily. Macrolide exporter (TC 3.A.1.122) family. In terms of assembly, homodimer. Part of the tripartite efflux system MacAB-TolC, which is composed of an inner membrane transporter, MacB, a periplasmic membrane fusion protein, MacA, and an outer membrane component, TolC. The complex forms a large protein conduit and can translocate molecules across both the inner and outer membranes. Interacts with MacA.

Its subcellular location is the cell inner membrane. In terms of biological role, part of the tripartite efflux system MacAB-TolC. MacB is a non-canonical ABC transporter that contains transmembrane domains (TMD), which form a pore in the inner membrane, and an ATP-binding domain (NBD), which is responsible for energy generation. Confers resistance against macrolides. The polypeptide is Macrolide export ATP-binding/permease protein MacB (Pectobacterium atrosepticum (strain SCRI 1043 / ATCC BAA-672) (Erwinia carotovora subsp. atroseptica)).